A 737-amino-acid polypeptide reads, in one-letter code: Fibronectin type III domain-containing protein 7 (737 aa).

Positions 1-25 (MAGRPEKCFSLIRFTLLCLKMVISS) are cleaved as a signal peptide. Fibronectin type-III domains lie at 28 to 115 (APEI…TVLA), 116 to 203 (APVL…SPRA), 204 to 288 (PANI…TVAC), 289 to 373 (APGR…TAPC), 374 to 459 (CPND…TAPC), 460 to 544 (SPEI…TVPC), 545 to 633 (CPAG…CPLG), and 631 to 715 (PLGV…YSVT). A glycan (N-linked (GlcNAc...) asparagine) is linked at N230. Residue N433 is glycosylated (N-linked (GlcNAc...) asparagine).

It is found in the secreted. This Mus musculus (Mouse) protein is Fibronectin type III domain-containing protein 7 (Fndc7).